Consider the following 107-residue polypeptide: EMBRYO SURROUNDING FACTOR 1-like protein 5 (107 aa).

Residues 1–22 (MSLLRFAILCIIFVSLFGVHEC) form the signal peptide. 4 cysteine pairs are disulfide-bonded: C35/C49, C40/C69, C47/C65, and C50/C58. Residues 87 to 107 (GLGPPIYLFFLGQFIYFVLGL) form a helical membrane-spanning segment.

It belongs to the MEG family. In terms of tissue distribution, expressed in flowers.

The protein localises to the membrane. This chain is EMBRYO SURROUNDING FACTOR 1-like protein 5 (ESFL5), found in Arabidopsis thaliana (Mouse-ear cress).